Here is a 213-residue protein sequence, read N- to C-terminus: Kynurenine formamidase (213 aa).

Position 18 (W18) interacts with substrate. H48, H52, and D54 together coordinate Zn(2+). The active-site Proton donor/acceptor is the H58. 2 residues coordinate Zn(2+): H160 and E172.

It belongs to the Cyclase 1 superfamily. KynB family. In terms of assembly, homodimer. The cofactor is Zn(2+).

The catalysed reaction is N-formyl-L-kynurenine + H2O = L-kynurenine + formate + H(+). It functions in the pathway amino-acid degradation; L-tryptophan degradation via kynurenine pathway; L-kynurenine from L-tryptophan: step 2/2. Its function is as follows. Catalyzes the hydrolysis of N-formyl-L-kynurenine to L-kynurenine, the second step in the kynurenine pathway of tryptophan degradation. This Burkholderia multivorans (strain ATCC 17616 / 249) protein is Kynurenine formamidase.